The sequence spans 150 residues: D-aminoacyl-tRNA deacylase (150 aa).

The Gly-cisPro motif, important for rejection of L-amino acids motif lies at 136-137 (GP).

It belongs to the DTD family. As to quaternary structure, homodimer.

It localises to the cytoplasm. The catalysed reaction is glycyl-tRNA(Ala) + H2O = tRNA(Ala) + glycine + H(+). The enzyme catalyses a D-aminoacyl-tRNA + H2O = a tRNA + a D-alpha-amino acid + H(+). An aminoacyl-tRNA editing enzyme that deacylates mischarged D-aminoacyl-tRNAs. Also deacylates mischarged glycyl-tRNA(Ala), protecting cells against glycine mischarging by AlaRS. Acts via tRNA-based rather than protein-based catalysis; rejects L-amino acids rather than detecting D-amino acids in the active site. By recycling D-aminoacyl-tRNA to D-amino acids and free tRNA molecules, this enzyme counteracts the toxicity associated with the formation of D-aminoacyl-tRNA entities in vivo and helps enforce protein L-homochirality. The chain is D-aminoacyl-tRNA deacylase from Staphylococcus aureus (strain MRSA252).